The chain runs to 487 residues: Zinc finger and BTB domain-containing protein 32 (487 aa).

One can recognise a BTB domain in the interval 29–87 (CDTLITVGSQEFPAHSLVLAGVSQQLGRRGQWALGEGISPSTFAQLLNFVYGESVELQP). Basic and acidic residues predominate over residues 112–166 (ARGDRAKKPDPGLKKHQEEPEKPSRNPERELGDPGEKQKPEQVSRTGGREQEMLH). Disordered regions lie at residues 112 to 244 (ARGD…TSVT) and 308 to 371 (QNQL…ARSR). Positions 308–320 (QNQLASSSPTPGS) are enriched in polar residues. Positions 357–369 (PPRPHPPPAPPAR) are enriched in pro residues. 3 C2H2-type zinc fingers span residues 373–395 (YACS…YRVH), 401–423 (FSCS…LRTH), and 428–450 (YRCS…MRGH). Positions 468-487 (SSSRPSRPSTSPCCPSSSTT) are disordered.

The protein belongs to the krueppel C2H2-type zinc-finger protein family. As to quaternary structure, homodimer (via PTB domain). Interacts with the N-terminal of FANCC. Interacts with ZBTB16. Interacts with GATA3. Predominantly expressed in testis. Some isoforms are ubiquitously expressed.

The protein resides in the nucleus. Its function is as follows. DNA-binding protein that binds to the to a 5'-TGTACAGTGT-3' core sequence. May function as a transcriptional transactivator and transcriptional repressor. Probably exerts its repressor effect by preventing GATA3 from binding to DNA. May play a role in regulating the differentiation and activation of helper T-cells. In Homo sapiens (Human), this protein is Zinc finger and BTB domain-containing protein 32 (ZBTB32).